A 141-amino-acid polypeptide reads, in one-letter code: Hemoglobin subunit alpha (141 aa).

Residues Val1–Arg141 form the Globin domain. Ser3 carries the phosphoserine modification. N6-succinyllysine occurs at positions 7 and 11. Lys16 carries the N6-acetyllysine; alternate modification. An N6-succinyllysine; alternate modification is found at Lys16. A Phosphotyrosine modification is found at Tyr24. Residue Ser35 is modified to Phosphoserine. N6-succinyllysine is present on Lys40. Ser49 is subject to Phosphoserine. His58 is an O2 binding site. Position 87 (His87) interacts with heme b. Residue Ser102 is modified to Phosphoserine. Thr108 bears the Phosphothreonine mark. Residue Ser124 is modified to Phosphoserine. Thr134 and Thr137 each carry phosphothreonine. The residue at position 138 (Ser138) is a Phosphoserine.

Belongs to the globin family. As to quaternary structure, heterotetramer of two alpha chains and two beta chains. As to expression, red blood cells.

In terms of biological role, involved in oxygen transport from the lung to the various peripheral tissues. Functionally, hemopressin acts as an antagonist peptide of the cannabinoid receptor CNR1. Hemopressin-binding efficiently blocks cannabinoid receptor CNR1 and subsequent signaling. This chain is Hemoglobin subunit alpha (HBA), found in Macropus giganteus (Eastern gray kangaroo).